The primary structure comprises 849 residues: Membrane protein-large ribosomal subunit bL9 fusion protein (849 aa).

A unknown region spans residues 1 to 680 (MFSKNKHNTK…TQLEGTNIKT (680 aa)). Helical transmembrane passes span 11 to 31 (FIVI…LDFQ) and 64 to 84 (IIFF…VISF). Positions 214–342 (KTLALAMITF…GGDQVVVNIE (129 aa)) constitute a GGDEF domain. Positions 681-849 (VTDTLKHFLK…FLNVTERKSK (169 aa)) are large ribosomal subunit protein bL9.

The protein belongs to the bacterial ribosomal protein bL9 family.

Its subcellular location is the cell membrane. In terms of biological role, binds to the 23S rRNA. This Onion yellows phytoplasma (strain OY-M) protein is Membrane protein-large ribosomal subunit bL9 fusion protein.